Reading from the N-terminus, the 828-residue chain is Phenylalanine--tRNA ligase beta subunit (828 aa).

In terms of domain architecture, tRNA-binding spans 44–155 (GPVDGPLTVG…GTAEPGADGA (112 aa)). One can recognise a B5 domain in the interval 411–486 (WSPPAIQMPA…RLEGLEVIGS (76 aa)). Mg(2+)-binding residues include Asp-464, Asp-470, Glu-473, and Glu-474. The FDX-ACB domain maps to 734-827 (SPFPAVFQDV…AAEAVGAELR (94 aa)).

The protein belongs to the phenylalanyl-tRNA synthetase beta subunit family. Type 1 subfamily. In terms of assembly, tetramer of two alpha and two beta subunits. Mg(2+) is required as a cofactor.

It localises to the cytoplasm. It carries out the reaction tRNA(Phe) + L-phenylalanine + ATP = L-phenylalanyl-tRNA(Phe) + AMP + diphosphate + H(+). The chain is Phenylalanine--tRNA ligase beta subunit from Mycolicibacterium paratuberculosis (strain ATCC BAA-968 / K-10) (Mycobacterium paratuberculosis).